A 171-amino-acid polypeptide reads, in one-letter code: LIM domain transcription factor LMO4-B (171 aa).

The span at 1 to 19 (MVNNRISESTTTAVSNNGS) shows a compositional bias: polar residues. Residues 1–20 (MVNNRISESTTTAVSNNGSP) form a disordered region. 2 consecutive LIM zinc-binding domains span residues 22-84 (KACA…LFGN) and 86-148 (GACN…GLLN).

Its function is as follows. Acts as a positive cofactor of GATA transcription factors to establish the identity of the ventral mesoderm during gastrulation. Down-regulation in the dorsal mesoderm is necessary for the proper formation of this territory since, when present, lmo4 may bind ldb1 and restrict the availability of this cofactor for Spemman organizer transcription factors. At neurula stages, suppresses primary neuron differentiation and modulates gene expression at the Isthmic Organizer of the midbrain-hindbrain boundary. The chain is LIM domain transcription factor LMO4-B (lmo4-b) from Xenopus laevis (African clawed frog).